The sequence spans 50 residues: Large ribosomal subunit protein bL33 (50 aa).

Belongs to the bacterial ribosomal protein bL33 family.

The polypeptide is Large ribosomal subunit protein bL33 (Endomicrobium trichonymphae).